We begin with the raw amino-acid sequence, 70 residues long: Guanine nucleotide-binding protein G(I)/G(S)/G(O) subunit gamma-8 (70 aa).

The residue at position 67 (cysteine 67) is a Cysteine methyl ester. Cysteine 67 is lipidated: S-geranylgeranyl cysteine. A propeptide spans 68–70 (VLL) (removed in mature form).

It belongs to the G protein gamma family. As to quaternary structure, g proteins are composed of 3 units, alpha, beta and gamma.

It localises to the cell membrane. Functionally, guanine nucleotide-binding proteins (G proteins) are involved as a modulator or transducer in various transmembrane signaling systems. The beta and gamma chains are required for the GTPase activity, for replacement of GDP by GTP, and for G protein-effector interaction. This Homo sapiens (Human) protein is Guanine nucleotide-binding protein G(I)/G(S)/G(O) subunit gamma-8 (GNG8).